We begin with the raw amino-acid sequence, 241 residues long: 2-C-methyl-D-erythritol 4-phosphate cytidylyltransferase (241 aa).

This sequence belongs to the IspD/TarI cytidylyltransferase family. IspD subfamily.

It carries out the reaction 2-C-methyl-D-erythritol 4-phosphate + CTP + H(+) = 4-CDP-2-C-methyl-D-erythritol + diphosphate. Its pathway is isoprenoid biosynthesis; isopentenyl diphosphate biosynthesis via DXP pathway; isopentenyl diphosphate from 1-deoxy-D-xylulose 5-phosphate: step 2/6. Functionally, catalyzes the formation of 4-diphosphocytidyl-2-C-methyl-D-erythritol from CTP and 2-C-methyl-D-erythritol 4-phosphate (MEP). The protein is 2-C-methyl-D-erythritol 4-phosphate cytidylyltransferase of Alkaliphilus metalliredigens (strain QYMF).